Reading from the N-terminus, the 301-residue chain is 4-diphosphocytidyl-2-C-methyl-D-erythritol kinase (301 aa).

Residue Lys18 is part of the active site. An ATP-binding site is contributed by Pro109 to Ala119. Asp151 is a catalytic residue.

It belongs to the GHMP kinase family. IspE subfamily.

It catalyses the reaction 4-CDP-2-C-methyl-D-erythritol + ATP = 4-CDP-2-C-methyl-D-erythritol 2-phosphate + ADP + H(+). It functions in the pathway isoprenoid biosynthesis; isopentenyl diphosphate biosynthesis via DXP pathway; isopentenyl diphosphate from 1-deoxy-D-xylulose 5-phosphate: step 3/6. Its function is as follows. Catalyzes the phosphorylation of the position 2 hydroxy group of 4-diphosphocytidyl-2C-methyl-D-erythritol. The protein is 4-diphosphocytidyl-2-C-methyl-D-erythritol kinase of Rhizobium meliloti (strain 1021) (Ensifer meliloti).